The primary structure comprises 423 residues: Putative competence-damage inducible protein (423 aa).

Belongs to the CinA family.

The chain is Putative competence-damage inducible protein from Streptococcus pyogenes serotype M18 (strain MGAS8232).